The chain runs to 211 residues: Glutathione S-transferase class-mu 28 kDa isozyme (211 aa).

Positions 4 to 86 constitute a GST N-terminal domain; that stretch reads DHIKVIYFNG…YMAKKHHMMG (83 aa). Residues tyrosine 10, arginine 16, tryptophan 41, lysine 45, leucine 53, glutamate 70, serine 71, and aspartate 104 each contribute to the glutathione site. In terms of domain architecture, GST C-terminal spans 88–211; sequence TEEEYYNVEK…YLSDRAATPF (124 aa).

The protein belongs to the GST superfamily. Mu family. As to quaternary structure, homodimer.

The catalysed reaction is RX + glutathione = an S-substituted glutathione + a halide anion + H(+). Its function is as follows. Conjugation of reduced glutathione to a wide number of exogenous and endogenous hydrophobic electrophiles. GST isoenzymes appear to play a central role in the parasite detoxification system. Other functions are also suspected including a role in increasing the solubility of haematin in the parasite gut. The polypeptide is Glutathione S-transferase class-mu 28 kDa isozyme (Schistosoma haematobium (Blood fluke)).